The sequence spans 195 residues: Imidazoleglycerol-phosphate dehydratase (195 aa).

It belongs to the imidazoleglycerol-phosphate dehydratase family.

Its subcellular location is the cytoplasm. It catalyses the reaction D-erythro-1-(imidazol-4-yl)glycerol 3-phosphate = 3-(imidazol-4-yl)-2-oxopropyl phosphate + H2O. Its pathway is amino-acid biosynthesis; L-histidine biosynthesis; L-histidine from 5-phospho-alpha-D-ribose 1-diphosphate: step 6/9. The polypeptide is Imidazoleglycerol-phosphate dehydratase (Azoarcus sp. (strain BH72)).